Reading from the N-terminus, the 111-residue chain is Exocrine gland-secreted peptide 22 (111 aa).

The signal sequence occupies residues 1 to 24 (MNSVPVMLFSISILLAAMLTEGRG).

This sequence belongs to the exocrine gland-secreted peptide family. In terms of tissue distribution, expressed in acinar cells of the lacrimal gland from where it is secreted into tears. Not detected in a range of other tissues tested including other exocrine glands, internal organs and sensory epithelia.

It localises to the secreted. In terms of biological role, pheromone produced by juveniles which activates a small number of vomeronasal organ sensory neurons and exhibits a powerful inhibitory effect on adult male mating behavior. This is Exocrine gland-secreted peptide 22 from Mus musculus (Mouse).